We begin with the raw amino-acid sequence, 267 residues long: Ribosomal RNA small subunit methyltransferase NEP1 (267 aa).

A disordered region spans residues 1-46; sequence MSELKNGTTEPKKNETTQSDSKSKSTSTNKSSVPPASLVPVQPTAL. A compositionally biased stretch (low complexity) spans 16–32; sequence TTQSDSKSKSTSTNKSS. Residues Leu-195, Gly-222, 227 to 229, and 242 to 247 each bind S-adenosyl-L-methionine; these read GKD and LSDYPL.

The protein belongs to the class IV-like SAM-binding methyltransferase superfamily. RNA methyltransferase NEP1 family. Homodimer.

The protein localises to the nucleus. It is found in the nucleolus. It catalyses the reaction a pseudouridine in rRNA + S-adenosyl-L-methionine = an N(1)-methylpseudouridine in rRNA + S-adenosyl-L-homocysteine + H(+). In terms of biological role, S-adenosyl-L-methionine-dependent pseudouridine N(1)-methyltransferase that methylates the pseudouridine corresponding to position 1189 (Psi1189) in S.cerevisiae 18S rRNA. Involved the biosynthesis of the hypermodified N1-methyl-N3-(3-amino-3-carboxypropyl) pseudouridine (m1acp3-Psi) conserved in eukaryotic 18S rRNA. Also has an essential role in 40S ribosomal subunit biogenesis independent on its methyltransferase activity, facilitating the incorporation of ribosomal protein S19 during the formation of pre-ribosomes. This chain is Ribosomal RNA small subunit methyltransferase NEP1, found in Candida albicans (Yeast).